We begin with the raw amino-acid sequence, 377 residues long: Succinyl-diaminopimelate desuccinylase (377 aa).

His-68 is a binding site for Zn(2+). Residue Asp-70 is part of the active site. Asp-101 contributes to the Zn(2+) binding site. Glu-135 serves as the catalytic Proton acceptor. Positions 136, 164, and 350 each coordinate Zn(2+).

This sequence belongs to the peptidase M20A family. DapE subfamily. In terms of assembly, homodimer. It depends on Zn(2+) as a cofactor. The cofactor is Co(2+).

The catalysed reaction is N-succinyl-(2S,6S)-2,6-diaminopimelate + H2O = (2S,6S)-2,6-diaminopimelate + succinate. It functions in the pathway amino-acid biosynthesis; L-lysine biosynthesis via DAP pathway; LL-2,6-diaminopimelate from (S)-tetrahydrodipicolinate (succinylase route): step 3/3. Functionally, catalyzes the hydrolysis of N-succinyl-L,L-diaminopimelic acid (SDAP), forming succinate and LL-2,6-diaminopimelate (DAP), an intermediate involved in the bacterial biosynthesis of lysine and meso-diaminopimelic acid, an essential component of bacterial cell walls. The protein is Succinyl-diaminopimelate desuccinylase of Acinetobacter baylyi (strain ATCC 33305 / BD413 / ADP1).